Reading from the N-terminus, the 95-residue chain is Co-chaperonin GroES (95 aa).

The protein belongs to the GroES chaperonin family. Heptamer of 7 subunits arranged in a ring. Interacts with the chaperonin GroEL.

Its subcellular location is the cytoplasm. Together with the chaperonin GroEL, plays an essential role in assisting protein folding. The GroEL-GroES system forms a nano-cage that allows encapsulation of the non-native substrate proteins and provides a physical environment optimized to promote and accelerate protein folding. GroES binds to the apical surface of the GroEL ring, thereby capping the opening of the GroEL channel. The chain is Co-chaperonin GroES from Staphylococcus haemolyticus (strain JCSC1435).